A 308-amino-acid polypeptide reads, in one-letter code: Low density lipoprotein receptor adapter protein 1 (308 aa).

Residue Met1 is modified to N-acetylmethionine. Phosphoserine is present on residues Ser14, Ser186, and Ser202. The region spanning 42–196 is the PID domain; sequence LLEGMLFSLK…QEGGDVLGAR (155 aa). A Clathrin box motif is present at residues 212–216; it reads LLDLE. The segment at 249–276 is AP-2 complex binding; it reads WELDDGLDEAFSRLAQSRTNPQVLDTGL. A [DE]-X(1,2)-F-X-X-[FL]-X-X-X-R motif motif is present at residues 257-266; the sequence is EAFSRLAQSR.

In terms of assembly, interacts (via PID domain) with LDLR (via NPXY motif). Binds to soluble clathrin trimers. Interacts with AP2B1; the interaction mediates the association with the AP-2 complex. Interacts with VLDLR. Interacts with LRP2. In terms of tissue distribution, expressed at high levels in the kidney, liver, and placenta, with lower levels detectable in brain, heart, muscle, colon, spleen, intestine, lung, and leukocytes.

Its subcellular location is the cytoplasm. Adapter protein (clathrin-associated sorting protein (CLASP)) required for efficient endocytosis of the LDL receptor (LDLR) in polarized cells such as hepatocytes and lymphocytes, but not in non-polarized cells (fibroblasts). May be required for LDL binding and internalization but not for receptor clustering in coated pits. May facilitate the endocytosis of LDLR and LDLR-LDL complexes from coated pits by stabilizing the interaction between the receptor and the structural components of the pits. May also be involved in the internalization of other LDLR family members. Binds to phosphoinositides, which regulate clathrin bud assembly at the cell surface. Required for trafficking of LRP2 to the endocytic recycling compartment which is necessary for LRP2 proteolysis, releasing a tail fragment which translocates to the nucleus and mediates transcriptional repression. This is Low density lipoprotein receptor adapter protein 1 from Homo sapiens (Human).